The following is a 174-amino-acid chain: Nucleoside-triphosphatase THEP1 (174 aa).

Residues 15–22 and 102–109 contribute to the ATP site; these read GMPGVGKT and LAIVDEIG.

This sequence belongs to the THEP1 NTPase family.

The enzyme catalyses a ribonucleoside 5'-triphosphate + H2O = a ribonucleoside 5'-diphosphate + phosphate + H(+). Functionally, has nucleotide phosphatase activity towards ATP, GTP, CTP, TTP and UTP. May hydrolyze nucleoside diphosphates with lower efficiency. This is Nucleoside-triphosphatase THEP1 from Pyrobaculum islandicum (strain DSM 4184 / JCM 9189 / GEO3).